A 188-amino-acid chain; its full sequence is Mediator of RNA polymerase II transcription subunit 29 (188 aa).

The span at 1–11 (MAMLLNQSQPP) shows a compositional bias: polar residues. Residues 1 to 27 (MAMLLNQSQPPQGREGGGTQVGSLGPG) form a disordered region.

It belongs to the Mediator complex subunit 29 family. Component of the Mediator complex.

The protein resides in the nucleus. Component of the Mediator complex, a coactivator involved in the regulated transcription of nearly all RNA polymerase II-dependent genes. Mediator functions as a bridge to convey information from gene-specific regulatory proteins to the basal RNA polymerase II transcription machinery. Mediator is recruited to promoters by direct interactions with regulatory proteins and serves as a scaffold for the assembly of a functional preinitiation complex with RNA polymerase II and the general transcription factors. In Xenopus tropicalis (Western clawed frog), this protein is Mediator of RNA polymerase II transcription subunit 29 (med29).